Consider the following 252-residue polypeptide: Type III pantothenate kinase (252 aa).

6–13 provides a ligand contact to ATP; it reads DMGNTRLK. Substrate contacts are provided by residues Tyr93 and 100–103; that span reads GVDR. Asp102 functions as the Proton acceptor in the catalytic mechanism. Thr126 contributes to the ATP binding site. Residue Thr179 coordinates substrate.

The protein belongs to the type III pantothenate kinase family. In terms of assembly, homodimer. The cofactor is NH4(+). K(+) is required as a cofactor.

Its subcellular location is the cytoplasm. The enzyme catalyses (R)-pantothenate + ATP = (R)-4'-phosphopantothenate + ADP + H(+). It participates in cofactor biosynthesis; coenzyme A biosynthesis; CoA from (R)-pantothenate: step 1/5. Its function is as follows. Catalyzes the phosphorylation of pantothenate (Pan), the first step in CoA biosynthesis. The sequence is that of Type III pantothenate kinase from Cellvibrio japonicus (strain Ueda107) (Pseudomonas fluorescens subsp. cellulosa).